The primary structure comprises 475 residues: NADP-dependent glyceraldehyde-3-phosphate dehydrogenase (475 aa).

Residue Arg-103 participates in substrate binding. Ser-151 contributes to the NADP(+) binding site. Asn-154–Tyr-155 contacts substrate. NADP(+) contacts are provided by residues Lys-177, Thr-180, Asp-215, and Gly-230–Leu-251. Residues Glu-250 and Cys-284 contribute to the active site. Position 283 to 285 (Arg-283 to Thr-285) interacts with substrate. An NADP(+)-binding site is contributed by Glu-377. Arg-437 contacts substrate.

This sequence belongs to the aldehyde dehydrogenase family. In terms of assembly, homotetramer.

It catalyses the reaction D-glyceraldehyde 3-phosphate + NADP(+) + H2O = (2R)-3-phosphoglycerate + NADPH + 2 H(+). The protein is NADP-dependent glyceraldehyde-3-phosphate dehydrogenase (gapN) of Streptococcus mutans serotype c (strain ATCC 700610 / UA159).